A 248-amino-acid chain; its full sequence is Chromatin target of PRMT1 protein (248 aa).

Ala2 is subject to N-acetylalanine. A phosphoserine mark is found at Ser40, Ser49, and Ser64. Lys70 participates in a covalent cross-link: Glycyl lysine isopeptide (Lys-Gly) (interchain with G-Cter in SUMO2). Residues 151–204 form a disordered region; that stretch reads LRRGGVRGRGGPGRGGLGRGAMGRGGIGGRGRGMIGRGRGGFGGRGRGRGRGRG. Residues 153-206 are interaction with PRMT1; sequence RGGVRGRGGPGRGGLGRGAMGRGGIGGRGRGMIGRGRGGFGGRGRGRGRGRGAL. The segment covering 157–195 has biased composition (gly residues); it reads RGRGGPGRGGLGRGAMGRGGIGGRGRGMIGRGRGGFGGR. The GAR motif; involved in 5hmC binding signature appears at 194–203; that stretch reads GRGRGRGRGR. Thr242 is modified (phosphothreonine).

As to quaternary structure, interacts with PRMT1 and PRMT5. Interacts with the 5FMC complex; the interaction is methylation-dependent. Interacts with FYTTD1, SET and PRC1 complex members CBX4, RNF2 and PHC2; the interactions are methylation-independent. Interacts with ZNF148. Interacts with WDR77 and ER. Asymmetrically methylated by PRMT1. Symmetrically methylated by PRMT5.

It localises to the nucleus. The protein localises to the nucleolus. Its subcellular location is the nucleoplasm. The protein resides in the nucleus speckle. Its function is as follows. Plays an important role in the ligand-dependent activation of estrogen receptor target genes. May play a role in the silencing of fetal globin genes. Recruits the 5FMC complex to ZNF148, leading to desumoylation of ZNF148 and subsequent transactivation of ZNF148 target genes. Required for the tumorigenicity of glioblastoma cells. Binds to 5-hydroxymethylcytosine (5hmC) and associates with the methylosome complex containing PRMT1, PRMT5, MEP50 and ERH. The CHTOP-methylosome complex associated with 5hmC methylates H4R3 and transactivates genes involved in glioblastomagenesis. The polypeptide is Chromatin target of PRMT1 protein (CHTOP) (Bos taurus (Bovine)).